Consider the following 544-residue polypeptide: Chaperonin GroEL 1 (544 aa).

ATP-binding positions include 30-33 (TLGP), K51, 87-91 (DGTTT), G415, 479-481 (NAA), and D495.

It belongs to the chaperonin (HSP60) family. As to quaternary structure, forms a cylinder of 14 subunits composed of two heptameric rings stacked back-to-back. Interacts with the co-chaperonin GroES.

Its subcellular location is the cytoplasm. It catalyses the reaction ATP + H2O + a folded polypeptide = ADP + phosphate + an unfolded polypeptide.. Functionally, together with its co-chaperonin GroES, plays an essential role in assisting protein folding. The GroEL-GroES system forms a nano-cage that allows encapsulation of the non-native substrate proteins and provides a physical environment optimized to promote and accelerate protein folding. This chain is Chaperonin GroEL 1, found in Vibrio cholerae serotype O1 (strain ATCC 39315 / El Tor Inaba N16961).